A 241-amino-acid chain; its full sequence is MPRILIIDDDPAISDLVSINLEMAGYDVQQAVDGIKGQALAVQLQPDLIMLDLMLPKVDGFTVCQRLRRDERTADIPVLMLTALGQIQDKIQGFDSGADDYLTKPFDVEEMLARVRALLRRTDRIPQAAKHSEILNQGPLTLVPERFEAIWFGKSIKLTHLEFELLHCLLQRHGQTVSPSDILREVWGYEPDDDIETIRVHIRHLRTKLEPNPRRPRFIKTVYGAGYCLELSTEEGGGSPT.

The region spanning 3–119 is the Response regulatory domain; the sequence is RILIIDDDPA…EMLARVRALL (117 aa). Asp-52 carries the 4-aspartylphosphate modification. Positions 132–231 form a DNA-binding region, ompR/PhoB-type; sequence SEILNQGPLT…VYGAGYCLEL (100 aa).

As to quaternary structure, interacts with reduced ferredoxin (petF). Interacts with CikA, RpaB, SasA, Sll0038 (pixG) and a number of other proteins. Post-translationally, phosphorylated by SasA; phosphorylation is maximal when KaiC phosphorylation is active during the circadian cycle. Dephosphorylated by CikA. CikA and SasA cooperation generates RpaA activity oscillation that is distinct from that generated by CikA or SasA alone and offset from the rhythm of KaiC phosphorylation.

The protein localises to the cytoplasm. Its function is as follows. Response regulator of 2 two-component regulatory systems SasA/RpaA and CikA/RpaA involved in genome-wide circadian gene expression. The histidine kinases have opposing effects modulated by the clock oscillator proteins; SasA phosphorylates RpaA (stimulated by fully phosphorylated KaiC1) while CikA dephosphorylates phospho-RpaA (stimulated by the phospho-Ser-432-KaiC1-KaiB complex). The RpaA regulon is about 300 genes, and includes itself, cikA, sigE, sigG, genes involved in photosynthesis, carbon metabolism in the light and dark, phototaxis, CRISPR arrays 2 and 3 as well as nearly 90 ncRNAs. Genes are up- or down-regulated in its absence. Involved in regulation of primary sugar and amino acid metabolism and in adaptation to light changes. Regulates the accumulation of the monomeric photosystem I and the D1 protein under high light conditions. Overexpression causes cells to grow more slowly, increases levels of transcripts for clock oscillator genes in the light and the dark, increases levels of SigE protein, increases accumulation of sugar catabolic enzymes in the dark with concomitant decreases in most sugar metabolites. Plays a role in cell division; overexpression from the psbAII promoter increases expression of some cell-division-related genes, alters cell volume and changes the outer cell membrane and cell wall appearance. This is DNA-binding dual master transcriptional regulator RpaA from Synechocystis sp. (strain ATCC 27184 / PCC 6803 / Kazusa).